Consider the following 121-residue polypeptide: Large ribosomal subunit protein uL18 (121 aa).

Residues 1–19 (MASKKVQKIRDKRKARVRA) are compositionally biased toward basic residues. The interval 1–23 (MASKKVQKIRDKRKARVRAKISG) is disordered.

Belongs to the universal ribosomal protein uL18 family. Part of the 50S ribosomal subunit; part of the 5S rRNA/L5/L18/L25 subcomplex. Contacts the 5S and 23S rRNAs.

Its function is as follows. This is one of the proteins that bind and probably mediate the attachment of the 5S RNA into the large ribosomal subunit, where it forms part of the central protuberance. This is Large ribosomal subunit protein uL18 from Syntrophus aciditrophicus (strain SB).